Consider the following 464-residue polypeptide: DNA primase DnaG (464 aa).

The 75-residue stretch at 200–274 (DSIIVVEGRA…DVDYVARAPE (75 aa)) folds into the Toprim domain. E206, D248, and D250 together coordinate Mg(2+). Residues 322-332 (NGREEKVREVK) show a composition bias toward basic and acidic residues. The tract at residues 322–359 (NGREEKVREVKPPAPAPAPAPAPKPIEKPEPKEREEKI) is disordered. Positions 333-345 (PPAPAPAPAPAPK) are enriched in pro residues. The span at 346–359 (PIEKPEPKEREEKI) shows a compositional bias: basic and acidic residues.

It belongs to the archaeal DnaG primase family. As to quaternary structure, forms a ternary complex with MCM helicase and DNA. Component of the archaeal exosome complex. The cofactor is Mg(2+).

It carries out the reaction ssDNA + n NTP = ssDNA/pppN(pN)n-1 hybrid + (n-1) diphosphate.. In terms of biological role, RNA polymerase that catalyzes the synthesis of short RNA molecules used as primers for DNA polymerase during DNA replication. Also part of the exosome, which is a complex involved in RNA degradation. Acts as a poly(A)-binding protein that enhances the interaction between heteromeric, adenine-rich transcripts and the exosome. In Thermococcus onnurineus (strain NA1), this protein is DNA primase DnaG.